We begin with the raw amino-acid sequence, 83 residues long: Mu-theraphotoxin-Hhn2k (83 aa).

Residues 1–21 (MKASMFLALAGLVLLFVVDYA) form the signal peptide. The propeptide occupies 22-48 (SESEEKEFPIELLSKIFAVDVFKGEER). Cystine bridges form between Cys-50–Cys-65, Cys-57–Cys-70, and Cys-64–Cys-77. A Leucine amide modification is found at Leu-81.

Belongs to the neurotoxin 10 (Hwtx-1) family. 15 (Hntx-3) subfamily. In terms of assembly, monomer. Expressed by the venom gland.

It localises to the secreted. Its function is as follows. Lethal neurotoxin. Selectively blocks tetrodotoxin-sensitive voltage-gated sodium channels (Nav). Does not affect tetrodotoxin-resistant voltage-gated sodium channels or calcium channels. The protein is Mu-theraphotoxin-Hhn2k of Cyriopagopus hainanus (Chinese bird spider).